The primary structure comprises 244 residues: 1-(5-phosphoribosyl)-5-[(5-phosphoribosylamino)methylideneamino] imidazole-4-carboxamide isomerase (244 aa).

Residue D10 is the Proton acceptor of the active site. The active-site Proton donor is D132.

The protein belongs to the HisA/HisF family.

The protein localises to the cytoplasm. The enzyme catalyses 1-(5-phospho-beta-D-ribosyl)-5-[(5-phospho-beta-D-ribosylamino)methylideneamino]imidazole-4-carboxamide = 5-[(5-phospho-1-deoxy-D-ribulos-1-ylimino)methylamino]-1-(5-phospho-beta-D-ribosyl)imidazole-4-carboxamide. The protein operates within amino-acid biosynthesis; L-histidine biosynthesis; L-histidine from 5-phospho-alpha-D-ribose 1-diphosphate: step 4/9. The chain is 1-(5-phosphoribosyl)-5-[(5-phosphoribosylamino)methylideneamino] imidazole-4-carboxamide isomerase from Xanthomonas euvesicatoria pv. vesicatoria (strain 85-10) (Xanthomonas campestris pv. vesicatoria).